We begin with the raw amino-acid sequence, 2288 residues long: Protein Ycf2 (2288 aa).

An ATP-binding site is contributed by 1629–1636 (GSIGTGRS).

Belongs to the Ycf2 family.

The protein localises to the plastid. Its subcellular location is the chloroplast stroma. Probable ATPase of unknown function. Its presence in a non-photosynthetic plant (Epifagus virginiana) and experiments in tobacco indicate that it has an essential function which is probably not related to photosynthesis. This chain is Protein Ycf2, found in Phaseolus vulgaris (Kidney bean).